A 69-amino-acid polypeptide reads, in one-letter code: Beta-defensin 114 (69 aa).

The N-terminal stretch at 1-26 (MRIFYYLHFLCYVTFILPATCTLVNA) is a signal peptide. Cystine bridges form between Cys29/Cys57, Cys36/Cys50, and Cys40/Cys58.

The protein belongs to the beta-defensin family. As to expression, expressed in epididymis, predominantly in the caput (at protein level).

The protein localises to the secreted. Its function is as follows. Has a salt-sensitive antimicrobial activity against Gram-negative bacteria, including E.coli, Gram-positive, including S.aureus, and fungi, including C.albicans. Binds to and neutralizes bacterial lipopolysaccharides (LPS), abolishing TNF production by macrophages challenged with LPS. Rescues the LPS-induced reduction of sperm motility in vitro and may protect from LPS-induced lethality. The protein is Beta-defensin 114 (DEFB114) of Homo sapiens (Human).